The chain runs to 552 residues: 5'-AMP-activated protein kinase catalytic subunit alpha-2 (552 aa).

The 253-residue stretch at 16 to 268 (YVLGDTLGVG…IKDIREHEWF (253 aa)) folds into the Protein kinase domain. Residues 22–30 (LGVGTFGKV) and Lys45 each bind ATP. Asp139 functions as the Proton acceptor in the catalytic mechanism. At Thr172 the chain carries Phosphothreonine; by LKB1 and CaMKK2. Residue Thr258 is modified to Phosphothreonine. Residues 291 to 376 (EAVKEVCEKF…PERMPPLIAD (86 aa)) form an AIS region. Residue Ser377 is modified to Phosphoserine. Positions 478 to 519 (EQRSGSSTPQRSCSAAGLHRPRSSLDSVTAESHSLSGSLSGS) are disordered. Residues 480–490 (RSGSSTPQRSC) are compositionally biased toward polar residues. The residue at position 491 (Ser491) is a Phosphoserine. Low complexity predominate over residues 509–519 (SHSLSGSLSGS).

Belongs to the protein kinase superfamily. CAMK Ser/Thr protein kinase family. SNF1 subfamily. As to quaternary structure, AMPK is a heterotrimer of an alpha catalytic subunit (PRKAA1 or PRKAA2), a beta (PRKAB1 or PRKAB2) and a gamma non-catalytic subunits (PRKAG1, PRKAG2 or PRKAG3). Interacts with FNIP1 and FNIP2. Interacts with DUSP29. Interacts with ARF6. The phosphorylated form at Thr-172 mediated by CamKK2 interacts with ACSS2. Requires Mg(2+) as cofactor. In terms of processing, ubiquitinated. Post-translationally, phosphorylated at Thr-172 by STK11/LKB1 in complex with STE20-related adapter-alpha (STRADA) pseudo kinase and CAB39. Also phosphorylated at Thr-172 by CAMKK2; triggered by a rise in intracellular calcium ions, without detectable changes in the AMP/ATP ratio. CAMKK1 can also phosphorylate Thr-172, but at much lower level. Dephosphorylated by protein phosphatase 2A and 2C (PP2A and PP2C). Phosphorylated by ULK1; leading to negatively regulate AMPK activity and suggesting the existence of a regulatory feedback loop between ULK1 and AMPK. Dephosphorylated by PPM1A and PPM1B at Thr-172 (mediated by STK11/LKB1).

The protein localises to the cytoplasm. It is found in the nucleus. The catalysed reaction is L-seryl-[protein] + ATP = O-phospho-L-seryl-[protein] + ADP + H(+). The enzyme catalyses L-threonyl-[protein] + ATP = O-phospho-L-threonyl-[protein] + ADP + H(+). It carries out the reaction L-seryl-[acetyl-CoA carboxylase] + ATP = O-phospho-L-seryl-[acetyl-CoA carboxylase] + ADP + H(+). It catalyses the reaction L-seryl-[3-hydroxy-3-methylglutaryl-coenzyme A reductase] + ATP = O-phospho-L-seryl-[3-hydroxy-3-methylglutaryl-coenzyme A reductase] + ADP + H(+). With respect to regulation, activated by phosphorylation on Thr-172. Binding of AMP to non-catalytic gamma subunit (PRKAG1, PRKAG2 or PRKAG3) results in allosteric activation, inducing phosphorylation on Thr-172. AMP-binding to gamma subunit also sustains activity by preventing dephosphorylation of Thr-172. ADP also stimulates Thr-172 phosphorylation, without stimulating already phosphorylated AMPK. ATP promotes dephosphorylation of Thr-172, rendering the enzyme inactive. Under physiological conditions AMPK mainly exists in its inactive form in complex with ATP, which is much more abundant than AMP. Selectively inhibited by compound C (6-[4-(2-Piperidin-1-yl-ethoxy)-phenyl)]-3-pyridin-4-yl-pyyrazolo[1,5-a] pyrimidine. Activated by resveratrol, a natural polyphenol present in red wine, and S17834, a synthetic polyphenol. Salicylate/aspirin directly activates kinase activity, primarily by inhibiting Thr-172 dephosphorylation. Catalytic subunit of AMP-activated protein kinase (AMPK), an energy sensor protein kinase that plays a key role in regulating cellular energy metabolism. In response to reduction of intracellular ATP levels, AMPK activates energy-producing pathways and inhibits energy-consuming processes: inhibits protein, carbohydrate and lipid biosynthesis, as well as cell growth and proliferation. AMPK acts via direct phosphorylation of metabolic enzymes, and by longer-term effects via phosphorylation of transcription regulators. Regulates lipid synthesis by phosphorylating and inactivating lipid metabolic enzymes such as ACACA, ACACB, GYS1, HMGCR and LIPE; regulates fatty acid and cholesterol synthesis by phosphorylating acetyl-CoA carboxylase (ACACA and ACACB) and hormone-sensitive lipase (LIPE) enzymes, respectively. Promotes lipolysis of lipid droplets by mediating phosphorylation of isoform 1 of CHKA (CHKalpha2). Regulates insulin-signaling and glycolysis by phosphorylating IRS1, PFKFB2 and PFKFB3. Involved in insulin receptor/INSR internalization. AMPK stimulates glucose uptake in muscle by increasing the translocation of the glucose transporter SLC2A4/GLUT4 to the plasma membrane, possibly by mediating phosphorylation of TBC1D4/AS160. Regulates transcription and chromatin structure by phosphorylating transcription regulators involved in energy metabolism such as CRTC2/TORC2, FOXO3, histone H2B, HDAC5, MEF2C, MLXIPL/ChREBP, EP300, HNF4A, p53/TP53, SREBF1, SREBF2 and PPARGC1A. Acts as a key regulator of glucose homeostasis in liver by phosphorylating CRTC2/TORC2, leading to CRTC2/TORC2 sequestration in the cytoplasm. In response to stress, phosphorylates 'Ser-36' of histone H2B (H2BS36ph), leading to promote transcription. Acts as a key regulator of cell growth and proliferation by phosphorylating FNIP1, TSC2, RPTOR, WDR24 and ATG1/ULK1: in response to nutrient limitation, negatively regulates the mTORC1 complex by phosphorylating RPTOR component of the mTORC1 complex and by phosphorylating and activating TSC2. Also phosphorylates and inhibits GATOR2 subunit WDR24 in response to nutrient limitation, leading to suppress glucose-mediated mTORC1 activation. In response to energetic stress, phosphorylates FNIP1, inactivating the non-canonical mTORC1 signaling, thereby promoting nuclear translocation of TFEB and TFE3, and inducing transcription of lysosomal or autophagy genes. In response to nutrient limitation, promotes autophagy by phosphorylating and activating ATG1/ULK1. In that process also activates WDR45/WIPI4. Phosphorylates CASP6, thereby preventing its autoprocessing and subsequent activation. AMPK also acts as a regulator of circadian rhythm by mediating phosphorylation of CRY1, leading to destabilize it. May regulate the Wnt signaling pathway by phosphorylating CTNNB1, leading to stabilize it. Also acts as a regulator of cellular polarity by remodeling the actin cytoskeleton; probably by indirectly activating myosin. Also phosphorylates CFTR, EEF2K, KLC1, NOS3 and SLC12A1. Plays an important role in the differential regulation of pro-autophagy (composed of PIK3C3, BECN1, PIK3R4 and UVRAG or ATG14) and non-autophagy (composed of PIK3C3, BECN1 and PIK3R4) complexes, in response to glucose starvation. Can inhibit the non-autophagy complex by phosphorylating PIK3C3 and can activate the pro-autophagy complex by phosphorylating BECN1. Upon glucose starvation, promotes ARF6 activation in a kinase-independent manner leading to cell migration. Upon glucose deprivation mediates the phosphorylation of ACSS2 at 'Ser-659', which exposes the nuclear localization signal of ACSS2, required for its interaction with KPNA1 and nuclear translocation. Upon stress, regulates mitochondrial fragmentation through phosphorylation of MTFR1L. In Sus scrofa (Pig), this protein is 5'-AMP-activated protein kinase catalytic subunit alpha-2 (PRKAA2).